Consider the following 362-residue polypeptide: MHSFASLLAYGLAASATLASASPIEARGSCTFKTAAAAKAGKAGCSTITLDNIEVPAGTTLDLTGLTSGTKVIFEGTTTFDYEEWAGPLISMSGKDITVTGASGHLINCDGARWWDGKGTSGKKKPKFFYAHGLDSSSITGLNIKNTPLMAFSVQADDITLTDITINNADGDTLGGHNTDAFDVGNSVGVNIIKPWVHNQDDCLAINSGENIWFTSGTCIGGHGLSIGSVGGRSNNVVKNVTIEHSTVSNSENAVRIKTVSGATGSVSEITYSNIVMSGISDYGVVIQQDYEDGKPTGKPTNGVTITDVKLESVTGTVDSKATDIYLLCGSGSCSDWTWDDVKVTGGKKSTACKNYPSVASC.

A signal peptide spans 1–21 (MHSFASLLAYGLAASATLASA). A propeptide spanning residues 22 to 27 (SPIEAR) is cleaved from the precursor. Cys30 and Cys45 are disulfide-bonded. The stretch at 156 to 186 (ADDITLTDITINNADGDTLGGHNTDAFDVGN) is one PbH1 1 repeat. Asp201 functions as the Proton donor in the catalytic mechanism. The cysteines at positions 203 and 219 are disulfide-linked. The active site involves His223. PbH1 repeat units lie at residues 238–259 (VKNVTIEHSTVSNSENAVRIKT), 267–289 (VSEITYSNIVMSGISDYGVVIQQ), and 301–322 (TNGVTITDVKLESVTGTVDSKA). An N-linked (GlcNAc...) (high mannose) asparagine glycan is attached at Asn240. 2 cysteine pairs are disulfide-bonded: Cys329–Cys334 and Cys353–Cys362.

This sequence belongs to the glycosyl hydrolase 28 family.

Its subcellular location is the secreted. It catalyses the reaction (1,4-alpha-D-galacturonosyl)n+m + H2O = (1,4-alpha-D-galacturonosyl)n + (1,4-alpha-D-galacturonosyl)m.. In terms of biological role, involved in maceration and soft-rotting of plant tissue. Hydrolyzes the 1,4-alpha glycosidic bonds of de-esterified pectate in the smooth region of the plant cell wall. The polypeptide is Endopolygalacturonase II (Aspergillus niger).